The primary structure comprises 1097 residues: Putative regulator of nonsense transcripts 1 (1097 aa).

Residues serine 42 to glutamine 53 show a composition bias toward low complexity. Residues serine 42–asparagine 67 are disordered. The region spanning threonine 96–asparagine 254 is the Upf1 CH-rich domain. Cysteine 104, cysteine 108, cysteine 119, serine 122, cysteine 127, histidine 137, histidine 141, cysteine 147, cysteine 165, cysteine 168, cysteine 191, and cysteine 195 together coordinate Zn(2+). The C3H stretch occupies residues cysteine 104 to histidine 137. The tract at residues cysteine 119–cysteine 147 is CC/SHH/C. The tract at residues cysteine 165–cysteine 195 is C4. ATP is bound by residues glutamine 457, glycine 474–threonine 481, tyrosine 683, and glutamate 813. The interval glutamine 977 to glycine 998 is disordered.

Belongs to the DNA2/NAM7 helicase family.

The protein resides in the cytoplasm. Its subcellular location is the P-body. It catalyses the reaction ATP + H2O = ADP + phosphate + H(+). Functionally, RNA-dependent helicase required for nonsense-mediated decay (NMD) of aberrant mRNAs containing premature stop codons and modulates the expression level of normal mRNAs. The formation of an rent1-rent2-rent3 surveillance complex is believed to activate NMD. The protein is Putative regulator of nonsense transcripts 1 (rent1) of Takifugu rubripes (Japanese pufferfish).